The following is a 232-amino-acid chain: 6-hydroxymethyl-7,8-dihydropterin pyrophosphokinase (232 aa).

The protein belongs to the archaeal 6-HMPDK family. Requires Mg(2+) as cofactor.

It catalyses the reaction 6-hydroxymethyl-7,8-dihydropterin + ATP = (7,8-dihydropterin-6-yl)methyl diphosphate + AMP + H(+). It participates in cofactor biosynthesis; 5,6,7,8-tetrahydromethanopterin biosynthesis. Its function is as follows. Catalyzes the transfer of diphosphate from ATP to 6-hydroxymethyl-7,8-dihydropterin (6-HMD), leading to 6-hydroxymethyl-7,8-dihydropterin diphosphate (6-HMDP). This Methanothermobacter thermautotrophicus (strain ATCC 29096 / DSM 1053 / JCM 10044 / NBRC 100330 / Delta H) (Methanobacterium thermoautotrophicum) protein is 6-hydroxymethyl-7,8-dihydropterin pyrophosphokinase.